A 338-amino-acid polypeptide reads, in one-letter code: UPF0194 membrane protein in asrC 5'region (338 aa).

The N-terminal stretch at methionine 1–alanine 23 is a signal peptide. Residues lysine 148–aspartate 207 are a coiled coil.

It belongs to the UPF0194 family.

The protein localises to the periplasm. This is UPF0194 membrane protein in asrC 5'region from Acidithiobacillus ferridurans.